The primary structure comprises 357 residues: UDP-N-acetylglucosamine--N-acetylmuramyl-(pentapeptide) pyrophosphoryl-undecaprenol N-acetylglucosamine transferase (357 aa).

UDP-N-acetyl-alpha-D-glucosamine contacts are provided by residues 12–14 (TAG), Arg-166, Ser-196, and Gln-291.

It belongs to the glycosyltransferase 28 family. MurG subfamily.

The protein localises to the cell membrane. It carries out the reaction di-trans,octa-cis-undecaprenyl diphospho-N-acetyl-alpha-D-muramoyl-L-alanyl-D-glutamyl-meso-2,6-diaminopimeloyl-D-alanyl-D-alanine + UDP-N-acetyl-alpha-D-glucosamine = di-trans,octa-cis-undecaprenyl diphospho-[N-acetyl-alpha-D-glucosaminyl-(1-&gt;4)]-N-acetyl-alpha-D-muramoyl-L-alanyl-D-glutamyl-meso-2,6-diaminopimeloyl-D-alanyl-D-alanine + UDP + H(+). It functions in the pathway cell wall biogenesis; peptidoglycan biosynthesis. Its function is as follows. Cell wall formation. Catalyzes the transfer of a GlcNAc subunit on undecaprenyl-pyrophosphoryl-MurNAc-pentapeptide (lipid intermediate I) to form undecaprenyl-pyrophosphoryl-MurNAc-(pentapeptide)GlcNAc (lipid intermediate II). In Geobacillus kaustophilus (strain HTA426), this protein is UDP-N-acetylglucosamine--N-acetylmuramyl-(pentapeptide) pyrophosphoryl-undecaprenol N-acetylglucosamine transferase.